The chain runs to 102 residues: Large ribosomal subunit protein uL24 (102 aa).

Belongs to the universal ribosomal protein uL24 family. Part of the 50S ribosomal subunit.

Functionally, one of two assembly initiator proteins, it binds directly to the 5'-end of the 23S rRNA, where it nucleates assembly of the 50S subunit. One of the proteins that surrounds the polypeptide exit tunnel on the outside of the subunit. The protein is Large ribosomal subunit protein uL24 of Agrobacterium fabrum (strain C58 / ATCC 33970) (Agrobacterium tumefaciens (strain C58)).